Reading from the N-terminus, the 475-residue chain is Bifunctional protein HldE (475 aa).

A ribokinase region spans residues 1–318; the sequence is MKITLPEFGK…ANALYTEQET (318 aa). Residue 195–198 participates in ATP binding; the sequence is NMSE. Residue Asp264 is part of the active site. The tract at residues 344–475 is cytidylyltransferase; sequence MTNGCFDILH…DIIKTIRERG (132 aa).

In the N-terminal section; belongs to the carbohydrate kinase PfkB family. It in the C-terminal section; belongs to the cytidylyltransferase family. Homodimer.

The enzyme catalyses D-glycero-beta-D-manno-heptose 7-phosphate + ATP = D-glycero-beta-D-manno-heptose 1,7-bisphosphate + ADP + H(+). It carries out the reaction D-glycero-beta-D-manno-heptose 1-phosphate + ATP + H(+) = ADP-D-glycero-beta-D-manno-heptose + diphosphate. The protein operates within nucleotide-sugar biosynthesis; ADP-L-glycero-beta-D-manno-heptose biosynthesis; ADP-L-glycero-beta-D-manno-heptose from D-glycero-beta-D-manno-heptose 7-phosphate: step 1/4. It participates in nucleotide-sugar biosynthesis; ADP-L-glycero-beta-D-manno-heptose biosynthesis; ADP-L-glycero-beta-D-manno-heptose from D-glycero-beta-D-manno-heptose 7-phosphate: step 3/4. Functionally, catalyzes the phosphorylation of D-glycero-D-manno-heptose 7-phosphate at the C-1 position to selectively form D-glycero-beta-D-manno-heptose-1,7-bisphosphate. Catalyzes the ADP transfer from ATP to D-glycero-beta-D-manno-heptose 1-phosphate, yielding ADP-D-glycero-beta-D-manno-heptose. This Aeromonas salmonicida (strain A449) protein is Bifunctional protein HldE.